The following is a 753-amino-acid chain: Glycerophosphodiester phosphodiesterase GDPDL6 (753 aa).

An N-terminal signal peptide occupies residues Met-1–Ala-17. GP-PDE domains follow at residues Pro-41–Ile-339 and Ala-355–Leu-654. N-linked (GlcNAc...) asparagine glycosylation is found at Asn-304, Asn-516, Asn-603, and Asn-715. The tract at residues Pro-707–Gly-729 is disordered. The chain crosses the membrane as a helical span at residues Val-731–Tyr-751.

The protein belongs to the glycerophosphoryl diester phosphodiesterase family. In terms of tissue distribution, expressed in flowers and siliques.

Its subcellular location is the membrane. The catalysed reaction is a sn-glycero-3-phosphodiester + H2O = an alcohol + sn-glycerol 3-phosphate + H(+). This chain is Glycerophosphodiester phosphodiesterase GDPDL6, found in Arabidopsis thaliana (Mouse-ear cress).